Consider the following 543-residue polypeptide: CTP synthase (543 aa).

The tract at residues 1–265 (MARYIFITGG…DDEVLAAFAI (265 aa)) is amidoligase domain. Ser-13 contributes to the CTP binding site. Ser-13 contacts UTP. 14-19 (SLGKGL) lines the ATP pocket. Position 54 (Tyr-54) interacts with L-glutamine. Residue Asp-71 coordinates ATP. Mg(2+) contacts are provided by Asp-71 and Glu-139. Residues 146-148 (DIE), 186-191 (KTKPTQ), and Lys-222 contribute to the CTP site. Residues 186–191 (KTKPTQ) and Lys-222 each bind UTP. 238–240 (RDA) provides a ligand contact to ATP. Positions 291-542 (TIAIVGKYTG…VQAALVQSRL (252 aa)) constitute a Glutamine amidotransferase type-1 domain. Gly-353 serves as a coordination point for L-glutamine. Cys-380 serves as the catalytic Nucleophile; for glutamine hydrolysis. L-glutamine-binding positions include 381-384 (FGMQ), Glu-404, and Arg-470. Active-site residues include His-515 and Glu-517.

This sequence belongs to the CTP synthase family. Homotetramer.

The enzyme catalyses UTP + L-glutamine + ATP + H2O = CTP + L-glutamate + ADP + phosphate + 2 H(+). It catalyses the reaction L-glutamine + H2O = L-glutamate + NH4(+). The catalysed reaction is UTP + NH4(+) + ATP = CTP + ADP + phosphate + 2 H(+). It functions in the pathway pyrimidine metabolism; CTP biosynthesis via de novo pathway; CTP from UDP: step 2/2. With respect to regulation, allosterically activated by GTP, when glutamine is the substrate; GTP has no effect on the reaction when ammonia is the substrate. The allosteric effector GTP functions by stabilizing the protein conformation that binds the tetrahedral intermediate(s) formed during glutamine hydrolysis. Inhibited by the product CTP, via allosteric rather than competitive inhibition. Catalyzes the ATP-dependent amination of UTP to CTP with either L-glutamine or ammonia as the source of nitrogen. Regulates intracellular CTP levels through interactions with the four ribonucleotide triphosphates. The sequence is that of CTP synthase from Rhodopseudomonas palustris (strain ATCC BAA-98 / CGA009).